The sequence spans 337 residues: MFLNKYISNYSRTRAVSCAPVLSYKKCSYRNFNGLLQARFQSNNLSWSNRNRVVYKSFQPNPRDKRFQWIFGALIAGGGVYYFTHLEYVPISNRRRFNDVSLDFEKRMAQDAYKEVMSEYGDRMLPSYHPTTLYVSRVLKRIIAVSGMSDLKWELHVIRDPTPNAFVLPGGKVFVFEGILPMCKGEDGLAAVLAHETAHQVARHSAEKIAFTRAVSCIVFLAAASLDLSGQLSHFLLNFGLLLPFSRKMETEADYIGLMLMSQACFDPNAAKTLWERMDAAEGQMGKALAFASTHPSSKKRIRKIEEWLPEAQVKRETSDCYHETWPMLQSFKEVHW.

The Mitochondrial matrix portion of the chain corresponds to 1 to 68; sequence MFLNKYISNY…QPNPRDKRFQ (68 aa). A helical transmembrane segment spans residues 69–89; the sequence is WIFGALIAGGGVYYFTHLEYV. The Mitochondrial intermembrane portion of the chain corresponds to 90 to 337; it reads PISNRRRFND…MLQSFKEVHW (248 aa). His-195 contacts Zn(2+). Glu-196 is a catalytic residue. Zn(2+) contacts are provided by His-199 and Glu-250. Cys-265 and Cys-321 are joined by a disulfide.

This sequence belongs to the peptidase M48 family. Zn(2+) serves as cofactor.

The protein localises to the mitochondrion inner membrane. Its activity is regulated as follows. Protease activity is induced in response to various mitochondrial stress. Protease that is part of the quality control system in the inner membrane of mitochondria. Cleaves and thereby promotes the turnover of mistranslated or misfolded membrane protein. This chain is Mitochondrial metalloendopeptidase OMA1, found in Schizosaccharomyces pombe (strain 972 / ATCC 24843) (Fission yeast).